A 203-amino-acid polypeptide reads, in one-letter code: Peptidyl-tRNA hydrolase (203 aa).

Residue Tyr16 coordinates tRNA. Catalysis depends on His21, which acts as the Proton acceptor. Residues Tyr68, Asn70, and Asn116 each coordinate tRNA.

The protein belongs to the PTH family. Monomer.

The protein resides in the cytoplasm. It carries out the reaction an N-acyl-L-alpha-aminoacyl-tRNA + H2O = an N-acyl-L-amino acid + a tRNA + H(+). Functionally, hydrolyzes ribosome-free peptidyl-tRNAs (with 1 or more amino acids incorporated), which drop off the ribosome during protein synthesis, or as a result of ribosome stalling. In terms of biological role, catalyzes the release of premature peptidyl moieties from peptidyl-tRNA molecules trapped in stalled 50S ribosomal subunits, and thus maintains levels of free tRNAs and 50S ribosomes. The chain is Peptidyl-tRNA hydrolase from Nostoc sp. (strain PCC 7120 / SAG 25.82 / UTEX 2576).